Here is a 466-residue protein sequence, read N- to C-terminus: UDP-N-acetylglucosamine--dolichyl-phosphate N-acetylglucosaminephosphotransferase (466 aa).

A helical membrane pass occupies residues 12-32; sequence AAFAVAAHAPVLGLILLGSIV. Residue D57 participates in UDP-N-acetyl-alpha-D-glucosamine binding. A glycan (N-linked (GlcNAc...) asparagine) is linked at N59. E90 is a binding site for UDP-N-acetyl-alpha-D-glucosamine. The next 2 helical transmembrane spans lie at 91-111 and 124-144; these read SLGILVGAMYLSVVVVLTVCL and PYASLPGPLMTITVMLLLGFV. K155 serves as a coordination point for dolichyl phosphate. 2 helical membrane-spanning segments follow: residues 156 to 176 and 236 to 256; these read IILTALGSLPLIMTYDGSLSV and GAALIYLGPVYLVYLSMLCIF. A dolichyl phosphate-binding site is contributed by 255–263; sequence IFCTNSINI. A Mg(2+)-binding site is contributed by N262. Helical transmembrane passes span 263 to 283, 316 to 336, 345 to 365, and 374 to 394; these read ILAGVNGVEVGQSIVIAVASV, DHQLRALLLLGPFIGVSLALW, VFVGDSYTYFAGTVLAVSSIT, and LFFAPQVFNFLISLPQLFSIV. N268 is a binding site for UDP-N-acetyl-alpha-D-glucosamine. D349 contributes to the Mg(2+) binding site. UDP-N-acetyl-alpha-D-glucosamine is bound at residue 398–400; sequence RHR. N416 is a glycosylation site (N-linked (GlcNAc...) asparagine). A helical membrane pass occupies residues 442 to 462; that stretch reads CQVIACVLGFVVRYVLSAFLY.

The protein belongs to the glycosyltransferase 4 family. Requires Mg(2+) as cofactor.

It is found in the endoplasmic reticulum membrane. It catalyses the reaction a di-trans,poly-cis-dolichyl phosphate + UDP-N-acetyl-alpha-D-glucosamine = an N-acetyl-alpha-D-glucosaminyl-diphospho-di-trans,poly-cis-dolichol + UMP. It participates in protein modification; protein glycosylation. Its activity is regulated as follows. Inhibited by natural nucleoside antibiotic tunicamycin, which acts as a structural analog and competitor of UDP-GlcNAc. Its function is as follows. UDP-N-acetylglucosamine--dolichyl-phosphate N-acetylglucosaminephosphotransferase that operates in the biosynthetic pathway of dolichol-linked oligosaccharides, the glycan precursors employed in protein asparagine (N)-glycosylation. The assembly of dolichol-linked oligosaccharides begins on the cytosolic side of the endoplasmic reticulum membrane and finishes in its lumen. The sequential addition of sugars to dolichol pyrophosphate produces dolichol-linked oligosaccharides containing fourteen sugars, including two GlcNAcs, nine mannoses and three glucoses. Once assembled, the oligosaccharide is transferred from the lipid to nascent proteins by oligosaccharyltransferases. Catalyzes the initial step of dolichol-linked oligosaccharide biosynthesis, transfering GlcNAc-1-P from cytosolic UDP-GlcNAc onto the carrier lipid dolichyl phosphate (P-dolichol), yielding GlcNAc-P-P-dolichol embedded in the cytoplasmic leaflet of the endoplasmic reticulum membrane. The polypeptide is UDP-N-acetylglucosamine--dolichyl-phosphate N-acetylglucosaminephosphotransferase (NAGT) (Leishmania amazonensis).